Here is a 271-residue protein sequence, read N- to C-terminus: uncharacterized protein (271 aa).

The AB hydrolase-1 domain occupies 24–124 (PIILLVHGGG…QVHVMIPHEP (101 aa)).

It belongs to the AB hydrolase superfamily.

This is an uncharacterized protein from Bacillus subtilis (strain 168).